Consider the following 359-residue polypeptide: Bergaptol O-methyltransferase (359 aa).

Histidine 126 lines the bergaptol pocket. Serine 179, glycine 203, aspartate 226, aspartate 246, and lysine 260 together coordinate S-adenosyl-L-homocysteine. Residue histidine 264 participates in bergaptol binding. Histidine 264 serves as the catalytic Proton acceptor.

The protein belongs to the class I-like SAM-binding methyltransferase superfamily. Cation-independent O-methyltransferase family. COMT subfamily.

The enzyme catalyses a 5-hydroxyfurocoumarin + S-adenosyl-L-methionine = a 5-methoxyfurocoumarin + S-adenosyl-L-homocysteine + H(+). The catalysed reaction is bergaptol + S-adenosyl-L-methionine = bergapten + S-adenosyl-L-homocysteine. With respect to regulation, inhibited by Cu(2+), Ni(2+) and Co(2+). In Glehnia littoralis (Beach silvertop), this protein is Bergaptol O-methyltransferase.